A 289-amino-acid polypeptide reads, in one-letter code: Transcriptional regulator Rob (289 aa).

Residues 8–106 enclose the HTH araC/xylS-type domain; that stretch reads RDLLIWLEGH…SQTPALYRRS (99 aa). 2 consecutive DNA-binding regions (H-T-H motif) follow at residues 25–46 and 73–96; these read DNVA…KDVT and ILDI…KKQF.

Transcriptional regulator. Represses transcription of genes belonging to the flagellar regulon, including flhD, flhB and fliC; probably thereby leading to repression of motility. Binds to regulatory regions of target genes, including the promoters of the flhDC operon and of P-type ATPase mgtA. Involved in post-transcriptional regulation of expression. Represses expression of the flhDC operon in a post-transcriptional manner. Binds to the right arm of the replication origin oriC of the chromosome. Rob binding may influence the formation of the nucleoprotein structure, required for oriC function in the initiation of replication. This Salmonella typhimurium (strain LT2 / SGSC1412 / ATCC 700720) protein is Transcriptional regulator Rob.